The following is a 1009-amino-acid chain: MEQVPSTGRLVQITVTEGYDLKGFKGDTPVTFIRAEFNQVVLGDSAKITVSPEGSAKYNFTSSFEFNPEGGITLDDLAHKPVFLTVTEVLPKEKKQKEEKTLILGQAVVDLLPLLEGQSSFQTTVPLHPVQGSPLETPRSSAKQCSLEVKVLVAEPLLTTAQISGGNLLKVTLEAAYSVPESFIPTGPGQNYMVGLQVPSLGEKDYPILFKNGTLKLGGEREPVPRPKKWPIANILAPGANNIPDAFIVGGPYEEEEGELNHPEDSEFRNQAECIKKRIIWDLESRCYLDPSAVVSFQKRIADCRLWPVEITRVPLVTVPKGKAGKTEKTDEEGQLSFHGVAYVNMVPLLYPGVKRIRGAFHVYPYLDSVVHEKTKCLLSLFRDIGHHLIHNNKIGGINSLLSKQAVSKNLKEDKPVKEKDIDGRPRPGDVQAPSIKSQSSDTPLEGEPPLSHNPEGQQYVEAGTYIVLEIQLDKALVPKRMPEELARRVKEMIPPRPPLTRRTGGAQKAVSDYHTQIKNISRAILDEYYRMFGKQVAKLESDMDSETLEEQKCQLSYELNCSGKYFAFKEQLKHAVVKIVREKYLKTTSFESQEELQTFISELYVFLVDQMHVALNQTMPDDVQGTIATIFTSSEQLRLFAFEAEVNENFEMAAAYYKERLVREPQNLDHWLDYGVFCLLTEDNIKAQECFRKALSLNQSHIHSLLLCGVLAVLLENYEQAEIFFEDATCLEPTNVVAWTLLGLYYEIQNNDIRMEMAFHEASKQLQAQMLQAQVTKQKSAGVVEDVEERGKRESSLGPWGITNGSATAIKVEAPAGPGAALSILDKFLEESSKLQSDSQEPILTTQTWDPSINQKPSNTFIKEIPTKKEACYERTISFVVDASEMHFIFLRLGLIYLEEKEYEKAKKTYMQACKRSPSCLTWLGLGIACYRLEELTEAEDALSEANALNNYNAEVWAYLALVCLKVGRQLEAEQAYKYMIKLKLKDEALLAEIHTLQETVGFGNPSF.

Residues 410–428 (NLKEDKPVKEKDIDGRPRP) show a composition bias toward basic and acidic residues. Positions 410–457 (NLKEDKPVKEKDIDGRPRPGDVQAPSIKSQSSDTPLEGEPPLSHNPEG) are disordered. TPR repeat units follow at residues 498 to 531 (PPLT…EYYR), 635 to 668 (SEQL…EPQN), 669 to 702 (LDHW…NQSH), 704 to 736 (HSLL…EPTN), 888 to 921 (HFIF…SPSC), 923 to 954 (TWLG…NNYN), and 956 to 988 (EVWA…KLKD).

It belongs to the CFAP70 family.

The protein resides in the cell projection. Its subcellular location is the cilium. The protein localises to the flagellum. It is found in the cytoplasm. It localises to the cytoskeleton. The protein resides in the flagellum basal body. Its subcellular location is the cilium axoneme. Its function is as follows. Axoneme-binding protein that plays a role in the regulation of ciliary motility and cilium length. The polypeptide is Cilia- and flagella-associated protein 70 (Macaca fascicularis (Crab-eating macaque)).